Consider the following 523-residue polypeptide: NADH-ubiquinone oxidoreductase chain 2 (523 aa).

The next 14 helical transmembrane spans lie at 3 to 23, 30 to 50, 62 to 82, 110 to 130, 135 to 155, 170 to 190, 212 to 232, 246 to 266, 281 to 301, 306 to 326, 333 to 353, 386 to 406, 419 to 439, and 490 to 510; these read LFGV…IPAI, IILL…NNIG, VTTI…LVLL, SVLA…SSLI, LISM…LATI, FLLG…LYSF, IEIS…AAPF, VVTT…ILEF, LLLI…LAQY, LLTY…AINN, FLFY…ILVA, GLSL…VGFF, GNFF…AYYL, and LVIA…TPLL.

This sequence belongs to the complex I subunit 2 family.

Its subcellular location is the mitochondrion inner membrane. It carries out the reaction a ubiquinone + NADH + 5 H(+)(in) = a ubiquinol + NAD(+) + 4 H(+)(out). In terms of biological role, core subunit of the mitochondrial membrane respiratory chain NADH dehydrogenase (Complex I) that is believed to belong to the minimal assembly required for catalysis. Complex I functions in the transfer of electrons from NADH to the respiratory chain. The immediate electron acceptor for the enzyme is believed to be ubiquinone. The chain is NADH-ubiquinone oxidoreductase chain 2 from Rhizopus oryzae (Mucormycosis agent).